The following is a 379-amino-acid chain: Cytochrome b (379 aa).

Transmembrane regions (helical) follow at residues 33-53 (FGSL…FLAM), 77-98 (WLIR…FIHV), 113-133 (WNIG…GYVL), and 178-198 (FFAF…VHLL). Positions 83 and 97 each coordinate heme b. Residues histidine 182 and histidine 196 each coordinate heme b. Histidine 201 is an a ubiquinone binding site. Transmembrane regions (helical) follow at residues 226–246 (TKDL…ALFF), 288–308 (LGGV…PLLN), 320–340 (VTQI…WIGG), and 347–367 (FTTI…ILIP).

The protein belongs to the cytochrome b family. In terms of assembly, the cytochrome bc1 complex contains 11 subunits: 3 respiratory subunits (MT-CYB, CYC1 and UQCRFS1), 2 core proteins (UQCRC1 and UQCRC2) and 6 low-molecular weight proteins (UQCRH/QCR6, UQCRB/QCR7, UQCRQ/QCR8, UQCR10/QCR9, UQCR11/QCR10 and a cleavage product of UQCRFS1). This cytochrome bc1 complex then forms a dimer. It depends on heme b as a cofactor.

The protein localises to the mitochondrion inner membrane. Component of the ubiquinol-cytochrome c reductase complex (complex III or cytochrome b-c1 complex) that is part of the mitochondrial respiratory chain. The b-c1 complex mediates electron transfer from ubiquinol to cytochrome c. Contributes to the generation of a proton gradient across the mitochondrial membrane that is then used for ATP synthesis. The sequence is that of Cytochrome b (MT-CYB) from Akodon reigi (Reig's grass mouse).